Consider the following 188-residue polypeptide: Elongation factor P (188 aa).

An N6-(3,6-diaminohexanoyl)-5-hydroxylysine modification is found at lysine 34.

This sequence belongs to the elongation factor P family. In terms of processing, may be beta-lysylated on the epsilon-amino group of Lys-34 by the combined action of EpmA and EpmB, and then hydroxylated on the C5 position of the same residue by EpmC (if this protein is present). Lysylation is critical for the stimulatory effect of EF-P on peptide-bond formation. The lysylation moiety may extend toward the peptidyltransferase center and stabilize the terminal 3-CCA end of the tRNA. Hydroxylation of the C5 position on Lys-34 may allow additional potential stabilizing hydrogen-bond interactions with the P-tRNA.

It localises to the cytoplasm. Its pathway is protein biosynthesis; polypeptide chain elongation. Involved in peptide bond synthesis. Alleviates ribosome stalling that occurs when 3 or more consecutive Pro residues or the sequence PPG is present in a protein, possibly by augmenting the peptidyl transferase activity of the ribosome. Modification of Lys-34 is required for alleviation. This is Elongation factor P from Enterobacter sp. (strain 638).